The sequence spans 131 residues: MKKIGILNNEISHVISKMGHTDSLAIGDCGLPIPEETKRIDLALIKNIPTFMDTLKSVMMELQVEEVQIANETQDLSSELFKEIKKQLGHAKITFISHEELKNNLKHCKAVIRTGEQTPYANIILKSGVVF.

H20 serves as the catalytic Proton donor. Residues D28, H98, and 120-122 (YAN) contribute to the substrate site.

This sequence belongs to the RbsD / FucU family. RbsD subfamily. Homodecamer.

The protein localises to the cytoplasm. It carries out the reaction beta-D-ribopyranose = beta-D-ribofuranose. It functions in the pathway carbohydrate metabolism; D-ribose degradation; D-ribose 5-phosphate from beta-D-ribopyranose: step 1/2. In terms of biological role, catalyzes the interconversion of beta-pyran and beta-furan forms of D-ribose. This chain is D-ribose pyranase, found in Clostridium tetani (strain Massachusetts / E88).